Reading from the N-terminus, the 36-residue chain is Photosystem I reaction center subunit VIII (36 aa).

The helical transmembrane segment at 8–28 threads the bilayer; sequence SILVPLVGLVFPAIAMASLFL.

This sequence belongs to the PsaI family.

It is found in the plastid. Its subcellular location is the chloroplast thylakoid membrane. Its function is as follows. May help in the organization of the PsaL subunit. The protein is Photosystem I reaction center subunit VIII of Vitis vinifera (Grape).